Consider the following 291-residue polypeptide: ATP synthase gamma chain (291 aa).

Belongs to the ATPase gamma chain family. As to quaternary structure, F-type ATPases have 2 components, CF(1) - the catalytic core - and CF(0) - the membrane proton channel. CF(1) has five subunits: alpha(3), beta(3), gamma(1), delta(1), epsilon(1). CF(0) has three main subunits: a, b and c.

Its subcellular location is the cell inner membrane. Functionally, produces ATP from ADP in the presence of a proton gradient across the membrane. The gamma chain is believed to be important in regulating ATPase activity and the flow of protons through the CF(0) complex. The sequence is that of ATP synthase gamma chain from Ralstonia nicotianae (strain ATCC BAA-1114 / GMI1000) (Ralstonia solanacearum).